A 257-amino-acid chain; its full sequence is Uridylate kinase (257 aa).

ATP is bound at residue 8-11 (KLSG). Positions 21 to 26 (GSAGFG) are involved in allosteric activation by GTP. Residue Gly56 participates in UMP binding. ATP-binding residues include Gly57 and Arg61. UMP-binding positions include Asp75 and 136 to 143 (NGAPFFTT). Residues Asn164, Tyr170, and Asp173 each coordinate ATP.

It belongs to the UMP kinase family. In terms of assembly, homohexamer.

It is found in the cytoplasm. It catalyses the reaction UMP + ATP = UDP + ADP. The protein operates within pyrimidine metabolism; CTP biosynthesis via de novo pathway; UDP from UMP (UMPK route): step 1/1. With respect to regulation, allosterically activated by GTP. Inhibited by UTP. Functionally, catalyzes the reversible phosphorylation of UMP to UDP. The protein is Uridylate kinase of Deinococcus geothermalis (strain DSM 11300 / CIP 105573 / AG-3a).